The primary structure comprises 245 residues: Small ribosomal subunit protein uS2 (245 aa).

It belongs to the universal ribosomal protein uS2 family.

This Dehalococcoides mccartyi (strain ATCC BAA-2266 / KCTC 15142 / 195) (Dehalococcoides ethenogenes (strain 195)) protein is Small ribosomal subunit protein uS2.